We begin with the raw amino-acid sequence, 247 residues long: Ribonuclease PH (247 aa).

Residues arginine 87 and 125-127 (GTR) contribute to the phosphate site.

Belongs to the RNase PH family. Homohexameric ring arranged as a trimer of dimers.

It carries out the reaction tRNA(n+1) + phosphate = tRNA(n) + a ribonucleoside 5'-diphosphate. Functionally, phosphorolytic 3'-5' exoribonuclease that plays an important role in tRNA 3'-end maturation. Removes nucleotide residues following the 3'-CCA terminus of tRNAs; can also add nucleotides to the ends of RNA molecules by using nucleoside diphosphates as substrates, but this may not be physiologically important. Probably plays a role in initiation of 16S rRNA degradation (leading to ribosome degradation) during starvation. The protein is Ribonuclease PH of Nostoc sp. (strain PCC 7120 / SAG 25.82 / UTEX 2576).